The primary structure comprises 204 residues: Probable GTP-binding protein EngB (204 aa).

The EngB-type G domain maps to Ser27–Pro201. GTP contacts are provided by residues Gly35–Ser42, Gly62–Leu66, Asp80–Gly83, Thr147–Asp150, and Phe180–Ala182. The Mg(2+) site is built by Ser42 and Thr64.

This sequence belongs to the TRAFAC class TrmE-Era-EngA-EngB-Septin-like GTPase superfamily. EngB GTPase family. Mg(2+) serves as cofactor.

In terms of biological role, necessary for normal cell division and for the maintenance of normal septation. The protein is Probable GTP-binding protein EngB of Histophilus somni (strain 129Pt) (Haemophilus somnus).